Here is a 323-residue protein sequence, read N- to C-terminus: Glutamyl-Q tRNA(Asp) synthetase (323 aa).

L-glutamate contacts are provided by residues 5–9 (RFAPT) and E41. Positions 8 to 18 (PTPSGALHLGN) match the 'HIGH' region motif. Zn(2+) contacts are provided by C105, C107, Y129, and C133. L-glutamate is bound by residues Y193 and R211. The 'KMSKS' region signature appears at 249 to 253 (RLAKR). Residue K252 coordinates ATP.

The protein belongs to the class-I aminoacyl-tRNA synthetase family. GluQ subfamily. Zn(2+) is required as a cofactor.

In terms of biological role, catalyzes the tRNA-independent activation of glutamate in presence of ATP and the subsequent transfer of glutamate onto a tRNA(Asp). Glutamate is transferred on the 2-amino-5-(4,5-dihydroxy-2-cyclopenten-1-yl) moiety of the queuosine in the wobble position of the QUC anticodon. The polypeptide is Glutamyl-Q tRNA(Asp) synthetase (Symbiobacterium thermophilum (strain DSM 24528 / JCM 14929 / IAM 14863 / T)).